The chain runs to 419 residues: Serine hydroxymethyltransferase (419 aa).

Residues Leu121 and 125-127 (GHL) each bind (6S)-5,6,7,8-tetrahydrofolate. Position 229 is an N6-(pyridoxal phosphate)lysine (Lys229). 354-356 (SPF) serves as a coordination point for (6S)-5,6,7,8-tetrahydrofolate.

Belongs to the SHMT family. Homodimer. Requires pyridoxal 5'-phosphate as cofactor.

It is found in the cytoplasm. The enzyme catalyses (6R)-5,10-methylene-5,6,7,8-tetrahydrofolate + glycine + H2O = (6S)-5,6,7,8-tetrahydrofolate + L-serine. The protein operates within one-carbon metabolism; tetrahydrofolate interconversion. It functions in the pathway amino-acid biosynthesis; glycine biosynthesis; glycine from L-serine: step 1/1. Its function is as follows. Catalyzes the reversible interconversion of serine and glycine with tetrahydrofolate (THF) serving as the one-carbon carrier. This reaction serves as the major source of one-carbon groups required for the biosynthesis of purines, thymidylate, methionine, and other important biomolecules. Also exhibits THF-independent aldolase activity toward beta-hydroxyamino acids, producing glycine and aldehydes, via a retro-aldol mechanism. The polypeptide is Serine hydroxymethyltransferase (Coxiella burnetii (strain CbuK_Q154) (Coxiella burnetii (strain Q154))).